A 276-amino-acid chain; its full sequence is Large ribosomal subunit protein uL2 (276 aa).

The tract at residues 225–276 is disordered; it reads VMNPVDHPHGGGEGKTAAGRDPVSPWGTPTKGYRTRSNKRTDSMIVQKRHKR.

Belongs to the universal ribosomal protein uL2 family. As to quaternary structure, part of the 50S ribosomal subunit. Forms a bridge to the 30S subunit in the 70S ribosome.

In terms of biological role, one of the primary rRNA binding proteins. Required for association of the 30S and 50S subunits to form the 70S ribosome, for tRNA binding and peptide bond formation. It has been suggested to have peptidyltransferase activity; this is somewhat controversial. Makes several contacts with the 16S rRNA in the 70S ribosome. This is Large ribosomal subunit protein uL2 from Cupriavidus taiwanensis (strain DSM 17343 / BCRC 17206 / CCUG 44338 / CIP 107171 / LMG 19424 / R1) (Ralstonia taiwanensis (strain LMG 19424)).